Here is a 117-residue protein sequence, read N- to C-terminus: G antigen 6 (117 aa).

Positions M1–C117 are disordered. Composition is skewed to acidic residues over residues F32–E45 and E87–E96. Over residues E103–C117 the composition is skewed to basic and acidic residues.

It belongs to the GAGE family. As to expression, expressed in a variety of tumor tissues but not in normal tissues, except testis.

In Homo sapiens (Human), this protein is G antigen 6 (GAGE6).